A 671-amino-acid chain; its full sequence is MIKLNIDGSEIEVSEGSTVYQACTQAGKEIPHFCYHERLKIAGNCRMCLVEMEKSPKPIASCAMPVSNGMVIHTDTPMVKKAREGVMEFLLINHPLDCPICDQGGECDLQDQAFRYGKGTNRFHENKRSIKDKYMGPLIKTAMTRCIQCTRCIRFANDIAGIEEMGAIHRGEHMEVTSYLEQTLDSEMSGNMIDICPVGALNSKPYAFKARKWELKHTASIGVHDAEGSNIRIDSRGDEVMRILPRVNEEINEEWLSDKNRFSYDGLKYQRLDLPYIRKNGKLVEASWSEALKTIADKIKSVKPEKIAAIAGSLVSVEAMFMLKTLLQKLGSNNYSVNQFDYKFDTTQRGNYLFNTTIAGVEKADLCLLIGANLRQIAPVLNSRIGQRVRAGSLKVARIGEGHNQTYRIQDLGSDIKIIEELAIGTHEFTKALKAAKYPMIIVGDGVYARDDGYAILSLIHKIVAEYNIMRDDFQGFNMLHNHASIVGGLDIGFNTPIKLEELELTYLLGADELPFDKLKSAFIIYQGHHGDSGAANADVILPAAAYTEQSGIYVNLEGRPQIAEKAVAPVGVAKEDIEIIKELAGSLKIDIGMDNLQEVRVRLAKEYKIFANIDKIVESKFAKFSFKDKLSKEPITMGPINYYMTDVISKNSVTMAKCVEAKEKRNERAA.

In terms of domain architecture, 2Fe-2S ferredoxin-type spans 1-78 (MIKLNIDGSE…GMVIHTDTPM (78 aa)). C34, C45, C48, and C62 together coordinate [2Fe-2S] cluster. A 4Fe-4S His(Cys)3-ligated-type domain is found at 78 to 117 (MVKKAREGVMEFLLINHPLDCPICDQGGECDLQDQAFRYG). [4Fe-4S] cluster-binding residues include H94, C98, C101, C107, C146, C149, C152, and C196. Residues 215–271 (LKHTASIGVHDAEGSNIRIDSRGDEVMRILPRVNEEINEEWLSDKNRFSYDGLKYQR) enclose the 4Fe-4S Mo/W bis-MGD-type domain.

The protein belongs to the complex I 75 kDa subunit family. It depends on [2Fe-2S] cluster as a cofactor. Requires [4Fe-4S] cluster as cofactor.

It carries out the reaction a quinone + NADH + 5 H(+)(in) = a quinol + NAD(+) + 4 H(+)(out). Its function is as follows. NDH-1 shuttles electrons from NADH, via FMN and iron-sulfur (Fe-S) centers, to quinones in the respiratory chain. Couples the redox reaction to proton translocation (for every two electrons transferred, four hydrogen ions are translocated across the cytoplasmic membrane), and thus conserves the redox energy in a proton gradient. This chain is NADH-quinone oxidoreductase subunit G (nuoG), found in Rickettsia felis (strain ATCC VR-1525 / URRWXCal2) (Rickettsia azadi).